The primary structure comprises 157 residues: Nascent polypeptide-associated complex subunit beta-1 (157 aa).

Disordered regions lie at residues 19 to 42 (KVGG…KDDT) and 126 to 157 (EKHE…ADVE). The 66-residue stretch at 38-103 (NKDDTKLQSQ…PQEKNLQDLF (66 aa)) folds into the NAC-A/B domain. The span at 126 to 142 (EKHEAKAPADAEKKDEA) shows a compositional bias: basic and acidic residues. The residue at position 151 (T151) is a Phosphothreonine.

It belongs to the NAC-beta family. Part of the nascent polypeptide-associated complex (NAC), consisting of EGD2 and either EGD1 or BTT1. NAC associates with ribosomes via EGD1 or BTT1, and with the CCR4-NOT complex.

The protein resides in the cytoplasm. It is found in the nucleus. Component of the nascent polypeptide-associated complex (NAC), a dynamic component of the ribosomal exit tunnel, protecting the emerging polypeptides from interaction with other cytoplasmic proteins to ensure appropriate nascent protein targeting. The NAC complex also promotes mitochondrial protein import by enhancing productive ribosome interactions with the outer mitochondrial membrane and blocks the inappropriate interaction of ribosomes translating non-secretory nascent polypeptides with translocation sites in the membrane of the endoplasmic reticulum. EGD1 may act as a transcription factor that exert a negative effect on the expression of several genes that are transcribed by RNA polymerase II. This chain is Nascent polypeptide-associated complex subunit beta-1 (EGD1), found in Saccharomyces cerevisiae (strain YJM789) (Baker's yeast).